Reading from the N-terminus, the 510-residue chain is Maturase K (510 aa).

The protein belongs to the intron maturase 2 family. MatK subfamily.

It localises to the plastid. The protein resides in the chloroplast. Its function is as follows. Usually encoded in the trnK tRNA gene intron. Probably assists in splicing its own and other chloroplast group II introns. The chain is Maturase K from Anomochloa marantoidea (Herbaceous bamboo).